Here is an 833-residue protein sequence, read N- to C-terminus: Glycerol-3-phosphate acyltransferase (833 aa).

Residues 309 to 314 carry the HXXXXD motif motif; it reads CHRSHI.

This sequence belongs to the GPAT/DAPAT family.

It localises to the cell inner membrane. It carries out the reaction sn-glycerol 3-phosphate + an acyl-CoA = a 1-acyl-sn-glycero-3-phosphate + CoA. It participates in phospholipid metabolism; CDP-diacylglycerol biosynthesis; CDP-diacylglycerol from sn-glycerol 3-phosphate: step 1/3. This is Glycerol-3-phosphate acyltransferase from Pseudomonas savastanoi pv. phaseolicola (strain 1448A / Race 6) (Pseudomonas syringae pv. phaseolicola (strain 1448A / Race 6)).